The primary structure comprises 257 residues: Beta-fibrinogenase mucrofibrase-1 (257 aa).

A signal peptide spans 1-18 (MVLIRVLANLLILQLSYA). Positions 19 to 24 (QKSSEL) are excised as a propeptide. Positions 25–248 (VIGGDECNIN…HLDWIKGIIA (224 aa)) constitute a Peptidase S1 domain. Cystine bridges form between Cys-31-Cys-162, Cys-49-Cys-65, Cys-97-Cys-255, Cys-141-Cys-209, Cys-173-Cys-188, and Cys-199-Cys-224. Catalysis depends on charge relay system residues His-64 and Asp-109. Ser-203 serves as the catalytic Charge relay system.

This sequence belongs to the peptidase S1 family. Snake venom subfamily. In terms of assembly, monomer. Expressed by the venom gland.

The protein resides in the secreted. Functionally, snake venom serine protease with strong beta-fibrinogenolytic activities, angiotensin I (AGT)-degrading activities and strong kallikrein-like activities in vitro, releasing bradykinin from kininogen (KNG1). Intravenous injection strongly lowers blood pressure in experimental rats, which may be explained by the action on angiotensin I and kininogen. In Protobothrops mucrosquamatus (Taiwan habu), this protein is Beta-fibrinogenase mucrofibrase-1.